Reading from the N-terminus, the 530-residue chain is Chaperone Ric-8A (530 aa).

S435 carries the post-translational modification Phosphoserine. Phosphothreonine is present on residues T440 and T442. A phosphoserine mark is found at S501, S522, S523, and S527.

It belongs to the synembryn family. Interacts with GDP-bound G alpha proteins GNAI1, GNAO1 and GNAQ, and with GNA13 with lower affinity. Does not interact with G-alpha proteins when they are in complex with subunits beta and gamma. Interacts (via C-terminus) with RGS14; the interaction stimulates the dissociation of the complex between RGS14 and the active GTP-bound form of GNAI1. Interacts with NCS1; interaction is favored in the absence of Ca(2+) and myristoylation of NCS1 is not required. In terms of processing, phosphorylated at Ser-435 and Thr-440 by CK2, stabilizing its interface with G alpha proteins.

The protein resides in the cytoplasm. Its subcellular location is the cell cortex. Chaperone that specifically binds and folds nascent G alpha proteins prior to G protein heterotrimer formation, promoting their stability and activity: folds GNAI1, GNAO1, GNA13 and GNAQ. Does not fold G(s) G-alpha proteins GNAS nor GNAL. Also acts as a guanine nucleotide exchange factor (GEF) for G alpha proteins by stimulating exchange of bound GDP for free GTP. Involved in regulation of microtubule pulling forces during mitotic movement of chromosomes by stimulating G(i)-alpha protein (GNAI1), possibly leading to release G(i)-alpha-GTP and NuMA proteins from the NuMA-GPSM2-G(i)-alpha-GDP complex. Also acts as an activator for G(q)-alpha (GNAQ) protein by enhancing the G(q)-coupled receptor-mediated ERK activation. The chain is Chaperone Ric-8A (RIC8A) from Bos taurus (Bovine).